A 1328-amino-acid polypeptide reads, in one-letter code: ABC transporter C family member 7 (1328 aa).

The ABC transmembrane type-1 1 domain maps to 104–389 (HKTSIIVQIF…LPQAIQRLLS (286 aa)). 6 helical membrane-spanning segments follow: residues 112-132 (IFSA…ILYV), 140-160 (SFLV…FLSI), 224-244 (LILL…CWTI), 245-265 (GYSG…STFL), 287-307 (ISEM…LFFI), and 333-353 (MVVQ…YTLI). One can recognise an ABC transporter 1 domain in the interval 457–678 (IELVNNDSIE…FDFESIMKTK (222 aa)). 490-497 (GVVGSGKS) contributes to the ATP binding site. Residues 684-695 (LNNSNNNNNNNN) are compositionally biased toward low complexity. The disordered stretch occupies residues 684 to 708 (LNNSNNNNNNNNNKEEEEDVENLEK). The next 5 helical transmembrane spans lie at 762–782 (FIFF…FLLF), 802–822 (DSFY…FLGI), 894–914 (VLMM…LALF), 988–1008 (IGIK…FFSL), and 1014–1034 (GLSV…NWCI). Residues 765 to 1046 (FFTMIMMYII…YIEFSMKMSS (282 aa)) enclose the ABC transmembrane type-1 2 domain. One can recognise an ABC transporter 2 domain in the interval 1083-1316 (IQFKNVEIKY…INNQNSKFKK (234 aa)). 1117 to 1124 (GKSGSGKS) lines the ATP pocket.

The protein belongs to the ABC transporter superfamily. ABCC family. Conjugate transporter (TC 3.A.1.208) subfamily.

Its subcellular location is the membrane. This Dictyostelium discoideum (Social amoeba) protein is ABC transporter C family member 7 (abcC7).